Consider the following 208-residue polypeptide: Large ribosomal subunit protein uL3 (208 aa).

At glutamine 149 the chain carries N5-methylglutamine.

Belongs to the universal ribosomal protein uL3 family. Part of the 50S ribosomal subunit. Forms a cluster with proteins L14 and L19. Methylated by PrmB.

Its function is as follows. One of the primary rRNA binding proteins, it binds directly near the 3'-end of the 23S rRNA, where it nucleates assembly of the 50S subunit. This chain is Large ribosomal subunit protein uL3, found in Histophilus somni (strain 129Pt) (Haemophilus somnus).